Consider the following 97-residue polypeptide: RNA-binding protein Hfq (97 aa).

Residues Asp-10–Val-70 enclose the Sm domain. The segment at His-74–Glu-97 is disordered. Residues Ala-81–Glu-97 are compositionally biased toward polar residues.

The protein belongs to the Hfq family. As to quaternary structure, homohexamer.

RNA chaperone that binds small regulatory RNA (sRNAs) and mRNAs to facilitate mRNA translational regulation in response to envelope stress, environmental stress and changes in metabolite concentrations. Also binds with high specificity to tRNAs. The chain is RNA-binding protein Hfq from Neisseria meningitidis serogroup A / serotype 4A (strain DSM 15465 / Z2491).